A 153-amino-acid chain; its full sequence is Myosin regulatory light chain (153 aa).

Blocked amino end (Ala) is present on A1. EF-hand domains follow at residues 15–50 and 81–116; these read KQIQ…LGRT and DSEE…MGNN. Ca(2+) contacts are provided by D28, D30, D32, and D39.

In terms of biological role, in molluscan muscle, calcium regulation is associated with myosin rather than with actin. Muscle myosin contains two types of light chains: the catalytic light chain, essential for ATPase activity, and the regulatory light chain, a calcium-binding protein responsible for Ca(2+) dependent binding and Ca(2+) dependent Mg-ATPase activity. The protein is Myosin regulatory light chain of Patinopecten sp. (Scallop).